Consider the following 491-residue polypeptide: Ketol-acid reductoisomerase (NADP(+)) (491 aa).

Residues 15 to 208 (AQLGKCRFMG…GGHRAGVLES (194 aa)) enclose the KARI N-terminal Rossmann domain. NADP(+) contacts are provided by residues 45-48 (CGAQ), R68, R76, S78, and 108-110 (DKQ). H132 is an active-site residue. Position 158 (G158) interacts with NADP(+). KARI C-terminal knotted domains follow at residues 209–344 (SFVA…TAPQ) and 345–484 (YEGK…MTDM). Residues D217, E221, E389, and E393 each contribute to the Mg(2+) site. S414 lines the substrate pocket.

This sequence belongs to the ketol-acid reductoisomerase family. Mg(2+) is required as a cofactor.

It carries out the reaction (2R)-2,3-dihydroxy-3-methylbutanoate + NADP(+) = (2S)-2-acetolactate + NADPH + H(+). It catalyses the reaction (2R,3R)-2,3-dihydroxy-3-methylpentanoate + NADP(+) = (S)-2-ethyl-2-hydroxy-3-oxobutanoate + NADPH + H(+). The protein operates within amino-acid biosynthesis; L-isoleucine biosynthesis; L-isoleucine from 2-oxobutanoate: step 2/4. Its pathway is amino-acid biosynthesis; L-valine biosynthesis; L-valine from pyruvate: step 2/4. In terms of biological role, involved in the biosynthesis of branched-chain amino acids (BCAA). Catalyzes an alkyl-migration followed by a ketol-acid reduction of (S)-2-acetolactate (S2AL) to yield (R)-2,3-dihydroxy-isovalerate. In the isomerase reaction, S2AL is rearranged via a Mg-dependent methyl migration to produce 3-hydroxy-3-methyl-2-ketobutyrate (HMKB). In the reductase reaction, this 2-ketoacid undergoes a metal-dependent reduction by NADPH to yield (R)-2,3-dihydroxy-isovalerate. This is Ketol-acid reductoisomerase (NADP(+)) from Salmonella arizonae (strain ATCC BAA-731 / CDC346-86 / RSK2980).